Consider the following 305-residue polypeptide: Nucleotide-binding protein Rxyl_2009 (305 aa).

24–31 serves as a coordination point for ATP; it reads GLSGAGKS. 75–78 provides a ligand contact to GTP; that stretch reads DIRG.

The protein belongs to the RapZ-like family.

In terms of biological role, displays ATPase and GTPase activities. The chain is Nucleotide-binding protein Rxyl_2009 from Rubrobacter xylanophilus (strain DSM 9941 / JCM 11954 / NBRC 16129 / PRD-1).